The primary structure comprises 86 residues: U15-lycotoxin-Ls1d (86 aa).

Residues 1 to 20 (MNSKIFAVLFLLAFLSCVLS) form the signal peptide. In terms of domain architecture, WAP spans 21 to 66 (DQYCPKSSITACKKMNIRNDCCKDDDCTGGSWCCATPCGNFCKYPT). Disulfide bonds link cysteine 24-cysteine 54, cysteine 32-cysteine 58, cysteine 41-cysteine 53, cysteine 42-cysteine 80, and cysteine 47-cysteine 62.

The protein belongs to the venom protein 11 family. 01 (wap-1) subfamily. In terms of processing, contains 5 disulfide bonds. In terms of tissue distribution, expressed by the venom gland.

It is found in the secreted. Functionally, has antibacterial activity. This is U15-lycotoxin-Ls1d from Lycosa singoriensis (Wolf spider).